Reading from the N-terminus, the 501-residue chain is Lysine--tRNA ligase (501 aa).

Residues E402 and E409 each coordinate Mg(2+).

It belongs to the class-II aminoacyl-tRNA synthetase family. Homodimer. Mg(2+) serves as cofactor.

Its subcellular location is the cytoplasm. The catalysed reaction is tRNA(Lys) + L-lysine + ATP = L-lysyl-tRNA(Lys) + AMP + diphosphate. The polypeptide is Lysine--tRNA ligase (Helicobacter pylori (strain G27)).